The following is a 105-amino-acid chain: Integration host factor (105 aa).

An H2TH motif, binds DNA motif is present at residues leucine 64–lysine 71. The segment at alanine 82–glutamine 94 is lid, binds DNA.

It belongs to the actinobacterial IHF (aIHF) family. Binds DNA as a monomer. As to quaternary structure, (Microbial infection) Forms a complex with L5 Int and attP DNA. The complex binds attB to form products.

It is found in the cytoplasm. It localises to the nucleoid. Functionally, a nucleoid-associated protein (NAP) that binds DNA without any sequence specificity. Compacts DNA. Binds along the whole chromosome in a dynamic manner, has equal affinity for the oriC site, attB and a randon 62% GC-rich sequence. Plays a role in transcription regulation. In terms of biological role, (Microbial infection) Stimulates temperate Mycobacterium phage L5 Int-mediated recombination in vitro using supercoiled attP (phage attachment site) DNA, linear attB DNA (bacterial attachment site) and L5 integrase (L5 Int or Int-L5, AC P22884). mIHF acts on L5 Int to stimulate formation of a specific intasome complex. mIHF probably stabilizes a sharp bend in the DNA during phage integration. The polypeptide is Integration host factor (Mycolicibacterium smegmatis (strain ATCC 700084 / mc(2)155) (Mycobacterium smegmatis)).